The primary structure comprises 634 residues: Alpha-L-iduronidase (634 aa).

The first 16 residues, 1–16 (MLTFFAAFLAAPLALA), serve as a signal peptide directing secretion. Alpha-D-mannopyranose-binding residues include Pro44, Leu46, and His48. His81 lines the alpha-L-iduronate pocket. An N-linked (GlcNAc...) asparagine glycan is attached at Asn100. The alpha-L-iduronate site is built by Asn171 and Glu172. Catalysis depends on Glu172, which acts as the Proton donor. 2 N-linked (GlcNAc...) asparagine glycosylation sites follow: Asn180 and Asn233. Alpha-L-iduronate is bound by residues Lys254, Glu289, and Gly295. Glu289 serves as the catalytic Nucleophile. Residue Trp296 coordinates alpha-D-mannopyranose. Asn326 is a glycosylation site (N-linked (GlcNAc...) asparagine). Alpha-L-iduronate contacts are provided by Asp339 and Arg353. N-linked (GlcNAc...) asparagine glycosylation is found at Asn362, Asn405, and Asn441. Cysteines 531 and 567 form a disulfide.

Belongs to the glycosyl hydrolase 39 family. As to quaternary structure, monomer. Post-translationally, N-glycosylation contributes to substrate binding and is required for full enzymatic activity. As to expression, ubiquitous.

The protein resides in the lysosome. It catalyses the reaction Hydrolysis of unsulfated alpha-L-iduronosidic linkages in dermatan sulfate.. The polypeptide is Alpha-L-iduronidase (Idua) (Mus musculus (Mouse)).